The following is a 32-amino-acid chain: MEALVYTFLLIGTLMVIFFAVFFRETPRILRK.

Residues 3–23 (ALVYTFLLIGTLMVIFFAVFF) form a helical membrane-spanning segment.

The protein belongs to the PsbT family. In terms of assembly, PSII is composed of 1 copy each of membrane proteins PsbA, PsbB, PsbC, PsbD, PsbE, PsbF, PsbH, PsbI, PsbJ, PsbK, PsbL, PsbM, PsbT, PsbX, PsbY, PsbZ, Psb30/Ycf12, at least 3 peripheral proteins of the oxygen-evolving complex and a large number of cofactors. It forms dimeric complexes.

It is found in the plastid. Its subcellular location is the chloroplast thylakoid membrane. Functionally, found at the monomer-monomer interface of the photosystem II (PS II) dimer, plays a role in assembly and dimerization of PSII. PSII is a light-driven water plastoquinone oxidoreductase, using light energy to abstract electrons from H(2)O, generating a proton gradient subsequently used for ATP formation. The polypeptide is Photosystem II reaction center protein T (Trieres chinensis (Marine centric diatom)).